We begin with the raw amino-acid sequence, 358 residues long: UDP-N-acetylglucosamine--N-acetylmuramyl-(pentapeptide) pyrophosphoryl-undecaprenol N-acetylglucosamine transferase (358 aa).

Residues 11 to 13 (TGG), Asn-120, Arg-161, Ser-188, and Gln-282 contribute to the UDP-N-acetyl-alpha-D-glucosamine site.

Belongs to the glycosyltransferase 28 family. MurG subfamily.

Its subcellular location is the cell inner membrane. The catalysed reaction is di-trans,octa-cis-undecaprenyl diphospho-N-acetyl-alpha-D-muramoyl-L-alanyl-D-glutamyl-meso-2,6-diaminopimeloyl-D-alanyl-D-alanine + UDP-N-acetyl-alpha-D-glucosamine = di-trans,octa-cis-undecaprenyl diphospho-[N-acetyl-alpha-D-glucosaminyl-(1-&gt;4)]-N-acetyl-alpha-D-muramoyl-L-alanyl-D-glutamyl-meso-2,6-diaminopimeloyl-D-alanyl-D-alanine + UDP + H(+). The protein operates within cell wall biogenesis; peptidoglycan biosynthesis. In terms of biological role, cell wall formation. Catalyzes the transfer of a GlcNAc subunit on undecaprenyl-pyrophosphoryl-MurNAc-pentapeptide (lipid intermediate I) to form undecaprenyl-pyrophosphoryl-MurNAc-(pentapeptide)GlcNAc (lipid intermediate II). In Synechococcus sp. (strain CC9311), this protein is UDP-N-acetylglucosamine--N-acetylmuramyl-(pentapeptide) pyrophosphoryl-undecaprenol N-acetylglucosamine transferase.